Reading from the N-terminus, the 87-residue chain is Cell division topological specificity factor (87 aa).

The protein belongs to the MinE family.

Prevents the cell division inhibition by proteins MinC and MinD at internal division sites while permitting inhibition at polar sites. This ensures cell division at the proper site by restricting the formation of a division septum at the midpoint of the long axis of the cell. This Leptothrix cholodnii (strain ATCC 51168 / LMG 8142 / SP-6) (Leptothrix discophora (strain SP-6)) protein is Cell division topological specificity factor.